The sequence spans 29 residues: Galanin (29 aa).

At threonine 29 the chain carries Threonine amide.

It belongs to the galanin family.

Its subcellular location is the secreted. In terms of biological role, contracts smooth muscle of the gastrointestinal and genitourinary tract, regulates growth hormone release, modulates insulin release, and may be involved in the control of adrenal secretion. This is Galanin (GAL) from Gallus gallus (Chicken).